Consider the following 570-residue polypeptide: Sulfite reductase [NADPH] hemoprotein beta-component (570 aa).

[4Fe-4S] cluster is bound by residues Cys434, Cys440, Cys479, and Cys483. Cys483 contributes to the siroheme binding site.

This sequence belongs to the nitrite and sulfite reductase 4Fe-4S domain family. In terms of assembly, alpha(8)-beta(8). The alpha component is a flavoprotein, the beta component is a hemoprotein. The cofactor is siroheme. Requires [4Fe-4S] cluster as cofactor.

It catalyses the reaction hydrogen sulfide + 3 NADP(+) + 3 H2O = sulfite + 3 NADPH + 4 H(+). It functions in the pathway sulfur metabolism; hydrogen sulfide biosynthesis; hydrogen sulfide from sulfite (NADPH route): step 1/1. Functionally, component of the sulfite reductase complex that catalyzes the 6-electron reduction of sulfite to sulfide. This is one of several activities required for the biosynthesis of L-cysteine from sulfate. This is Sulfite reductase [NADPH] hemoprotein beta-component from Escherichia coli O7:K1 (strain IAI39 / ExPEC).